The chain runs to 257 residues: Deoxyribose-phosphate aldolase (257 aa).

Residue aspartate 102 is the Proton donor/acceptor of the active site. Residue lysine 166 is the Schiff-base intermediate with acetaldehyde of the active site. The Proton donor/acceptor role is filled by lysine 198.

It belongs to the DeoC/FbaB aldolase family. DeoC type 2 subfamily.

The protein resides in the cytoplasm. It carries out the reaction 2-deoxy-D-ribose 5-phosphate = D-glyceraldehyde 3-phosphate + acetaldehyde. Its pathway is carbohydrate degradation; 2-deoxy-D-ribose 1-phosphate degradation; D-glyceraldehyde 3-phosphate and acetaldehyde from 2-deoxy-alpha-D-ribose 1-phosphate: step 2/2. Catalyzes a reversible aldol reaction between acetaldehyde and D-glyceraldehyde 3-phosphate to generate 2-deoxy-D-ribose 5-phosphate. The protein is Deoxyribose-phosphate aldolase of Shewanella amazonensis (strain ATCC BAA-1098 / SB2B).